The primary structure comprises 441 residues: GTPase Der (441 aa).

2 consecutive EngA-type G domains span residues 4-169 (PVVA…PEDI) and 178-353 (IKVA…DQAA). GTP is bound by residues 10-17 (GRPNVGKS), 57-61 (DTGGI), 120-123 (NKVD), 184-191 (GKPNAGKS), 231-235 (DTAGI), and 296-299 (NKWD). One can recognise a KH-like domain in the interval 354 to 438 (FRISTGMLND…PIRFIHRQRE (85 aa)).

Belongs to the TRAFAC class TrmE-Era-EngA-EngB-Septin-like GTPase superfamily. EngA (Der) GTPase family. Associates with the 50S ribosomal subunit.

In terms of biological role, GTPase that plays an essential role in the late steps of ribosome biogenesis. The sequence is that of GTPase Der from Ruminiclostridium cellulolyticum (strain ATCC 35319 / DSM 5812 / JCM 6584 / H10) (Clostridium cellulolyticum).